Here is a 335-residue protein sequence, read N- to C-terminus: Ketol-acid reductoisomerase (NADP(+)) 2 (335 aa).

The 180-residue stretch at 1 to 180 (MKTYYEQDAN…GCTRAGVIET (180 aa)) folds into the KARI N-terminal Rossmann domain. Residues 24–27 (YGSQ), Arg-47, Ser-51, and 81–84 (DEQQ) each bind NADP(+). The active site involves His-106. Residue Gly-132 participates in NADP(+) binding. A KARI C-terminal knotted domain is found at 181-326 (TFQEETETDL…EELREMMSWI (146 aa)). Residues Asp-189, Glu-193, Glu-225, and Glu-229 each coordinate Mg(2+). Residue Ser-250 coordinates substrate.

Belongs to the ketol-acid reductoisomerase family. Requires Mg(2+) as cofactor.

The catalysed reaction is (2R)-2,3-dihydroxy-3-methylbutanoate + NADP(+) = (2S)-2-acetolactate + NADPH + H(+). It catalyses the reaction (2R,3R)-2,3-dihydroxy-3-methylpentanoate + NADP(+) = (S)-2-ethyl-2-hydroxy-3-oxobutanoate + NADPH + H(+). Its pathway is amino-acid biosynthesis; L-isoleucine biosynthesis; L-isoleucine from 2-oxobutanoate: step 2/4. It functions in the pathway amino-acid biosynthesis; L-valine biosynthesis; L-valine from pyruvate: step 2/4. In terms of biological role, involved in the biosynthesis of branched-chain amino acids (BCAA). Catalyzes an alkyl-migration followed by a ketol-acid reduction of (S)-2-acetolactate (S2AL) to yield (R)-2,3-dihydroxy-isovalerate. In the isomerase reaction, S2AL is rearranged via a Mg-dependent methyl migration to produce 3-hydroxy-3-methyl-2-ketobutyrate (HMKB). In the reductase reaction, this 2-ketoacid undergoes a metal-dependent reduction by NADPH to yield (R)-2,3-dihydroxy-isovalerate. The polypeptide is Ketol-acid reductoisomerase (NADP(+)) 2 (Bacillus thuringiensis subsp. konkukian (strain 97-27)).